The sequence spans 405 residues: MTVDRRALGFGGSERAVYAADPWTTRGRLYPEDGSPTRSDFQRDRDRIVHTTAFRRLKHKTQVFIAQDGDHYRTRLTHTIEVAQIARALARALKLDEDLAEGVALVHDFGHTPFGHTGEDALHEVLLPYGGFDHNAQSLRIVTKLERRYAEFDGINLTWESLEGLVKHNGPLLTPEGAGTRGPVPQPILDYCELHDLELATYASLEAQVAAIADDIAYNTHDIDDGLRSGYLTFDMLEEIPFLAGLMAEVRARYPHLEPSRFTHEIMRRQITRMVEDVIGVAQQRLSILRPESAADIRAADRVIATFSDAMAETDRQIKALLFKRIYRNPDIMRIRAGAAQIVTDLFAAYMASPKEMQSHYWVDHIAGLADAPKARHVGDYLAGMTDTYAISAHRRLFDHTPDLR.

The 145-residue stretch at 75–219 (RLTHTIEVAQ…AAIADDIAYN (145 aa)) folds into the HD domain.

Belongs to the dGTPase family. Type 2 subfamily.

The sequence is that of Deoxyguanosinetriphosphate triphosphohydrolase-like protein from Rhizobium etli (strain ATCC 51251 / DSM 11541 / JCM 21823 / NBRC 15573 / CFN 42).